Here is a 67-residue protein sequence, read N- to C-terminus: Sec-independent protein translocase protein TatA (67 aa).

Residues 1–21 (MMPGPFELIVILVIVLLLFGG) traverse the membrane as a helical segment.

The protein belongs to the TatA/E family. The Tat system comprises two distinct complexes: a TatABC complex, containing multiple copies of TatA, TatB and TatC subunits, and a separate TatA complex, containing only TatA subunits. Substrates initially bind to the TatABC complex, which probably triggers association of the separate TatA complex to form the active translocon.

It is found in the cell inner membrane. Functionally, part of the twin-arginine translocation (Tat) system that transports large folded proteins containing a characteristic twin-arginine motif in their signal peptide across membranes. TatA could form the protein-conducting channel of the Tat system. This Ruthia magnifica subsp. Calyptogena magnifica protein is Sec-independent protein translocase protein TatA.